Consider the following 147-residue polypeptide: Large ribosomal subunit protein bL9 (147 aa).

Belongs to the bacterial ribosomal protein bL9 family.

Functionally, binds to the 23S rRNA. This chain is Large ribosomal subunit protein bL9, found in Marinomonas sp. (strain MWYL1).